The following is a 62-amino-acid chain: Large ribosomal subunit protein bL28 (62 aa).

This sequence belongs to the bacterial ribosomal protein bL28 family.

The sequence is that of Large ribosomal subunit protein bL28 from Wolinella succinogenes (strain ATCC 29543 / DSM 1740 / CCUG 13145 / JCM 31913 / LMG 7466 / NCTC 11488 / FDC 602W) (Vibrio succinogenes).